The following is a 591-amino-acid chain: Transcriptional regulator PUL4 (591 aa).

A DNA-binding region (zn(2)-C6 fungal-type) is located at residues 3–29 (CLECKKRKQKCDGQKPCRRCTKLNVKC).

It localises to the nucleus. In terms of biological role, transcription factor involved in regulation of the PUL gene cluster that mediates the formation of pulcherrimin, a red iron-containing pigment composed of two cyclized and modified leucine molecules that acts as a siderophore, a chelator that binds iron outside the cell for subsequent uptake. The sequence is that of Transcriptional regulator PUL4 from Kluyveromyces lactis (strain ATCC 8585 / CBS 2359 / DSM 70799 / NBRC 1267 / NRRL Y-1140 / WM37) (Yeast).